Reading from the N-terminus, the 450-residue chain is Probable malate:quinone oxidoreductase (450 aa).

This sequence belongs to the MQO family. FAD is required as a cofactor.

The enzyme catalyses (S)-malate + a quinone = a quinol + oxaloacetate. Its pathway is carbohydrate metabolism; tricarboxylic acid cycle; oxaloacetate from (S)-malate (quinone route): step 1/1. The polypeptide is Probable malate:quinone oxidoreductase (Helicobacter acinonychis (strain Sheeba)).